The chain runs to 294 residues: Universal stress protein MSMEG_3950/MSMEI_3859 (294 aa).

Gly-13 lines the ATP pocket. An Isoglutamyl lysine isopeptide (Lys-Gln) (interchain with Q-Cter in protein Pup) cross-link involves residue Lys-109. ATP is bound by residues 117–123 (GNRGMGA), 131–132 (ST), Gly-164, Asp-197, 261–267 (GSHGRGG), and 275–277 (SVS).

Belongs to the universal stress protein A family.

The polypeptide is Universal stress protein MSMEG_3950/MSMEI_3859 (Mycolicibacterium smegmatis (strain ATCC 700084 / mc(2)155) (Mycobacterium smegmatis)).